Consider the following 676-residue polypeptide: Protein timeless (676 aa).

Residues 77-108 are necessary for normal circadian rhythm; sequence VNTLQKLLNLWFEASLSESSEDNESNTSPPKK. Disordered regions lie at residues 94 to 145 and 346 to 398; these read ESSE…CDER and PESI…LVKR. Low complexity-rich tracts occupy residues 101 to 129 and 360 to 369; these read SNTS…SDNG and QGKPQHQKPP. Positions 388-398 match the Nuclear localization signal motif; it reads KELRRKKLVKR.

The protein belongs to the timeless family. In terms of assembly, forms a heterodimer with period (PER); the complex then translocates into the nucleus. In terms of processing, phosphorylated with a circadian rhythmicity.

The protein localises to the nucleus. It is found in the cytoplasm. The protein resides in the perinuclear region. Required for the production of circadian rhythms. The biological cycle depends on the rhythmic formation and nuclear localization of the TIM-PER complex. Light induces the degradation of TIM, which promotes elimination of PER. Nuclear activity of the heterodimer coordinatively regulates PER and TIM transcription through a negative feedback loop. Behaves as a negative element in circadian transcriptional loop. Does not appear to bind DNA, suggesting indirect transcriptional inhibition. This Drosophila hydei (Fruit fly) protein is Protein timeless (tim).